Reading from the N-terminus, the 360-residue chain is UDP-3-O-acylglucosamine N-acyltransferase (360 aa).

His-256 functions as the Proton acceptor in the catalytic mechanism. The disordered stretch occupies residues 341-360; sequence EGSGAETAARPDDDRDEGRG. A compositionally biased stretch (basic and acidic residues) spans 349–360; that stretch reads ARPDDDRDEGRG.

Belongs to the transferase hexapeptide repeat family. LpxD subfamily. As to quaternary structure, homotrimer.

It catalyses the reaction a UDP-3-O-[(3R)-3-hydroxyacyl]-alpha-D-glucosamine + a (3R)-hydroxyacyl-[ACP] = a UDP-2-N,3-O-bis[(3R)-3-hydroxyacyl]-alpha-D-glucosamine + holo-[ACP] + H(+). It functions in the pathway bacterial outer membrane biogenesis; LPS lipid A biosynthesis. Catalyzes the N-acylation of UDP-3-O-acylglucosamine using 3-hydroxyacyl-ACP as the acyl donor. Is involved in the biosynthesis of lipid A, a phosphorylated glycolipid that anchors the lipopolysaccharide to the outer membrane of the cell. The protein is UDP-3-O-acylglucosamine N-acyltransferase of Rhodopseudomonas palustris (strain ATCC BAA-98 / CGA009).